The following is a 215-amino-acid chain: Hibernation-associated plasma protein HP-27 (215 aa).

Positions 1–30 (MYEAGKRASFMGGAGIWILALSVLMHVVCS) are cleaved as a signal peptide. The disordered stretch occupies residues 34–79 (GNPESCNVPGPQGPPGMRGPPGTPGKPGPPGWNGFPGLPGPPGPPG). Positions 43–81 (GPQGPPGMRGPPGTPGKPGPPGWNGFPGLPGPPGPPGMT) constitute a Collagen-like domain. The span at 44 to 63 (PQGPPGMRGPPGTPGKPGPP) shows a compositional bias: pro residues. The region spanning 85–215 (HSKGTSAFAV…VFSGFLIHEN (131 aa)) is the C1q domain. Asn155 carries N-linked (GlcNAc...) asparagine glycosylation.

Plasma; synthesized in the liver.

It localises to the secreted. Its function is as follows. Plasma proteins HP-20, HP-25, HP-27 and HP-55 form a 140 kDa complex via disulfide bonds in the plasma and are hibernation specific. The polypeptide is Hibernation-associated plasma protein HP-27 (Tamias sibiricus (Siberian chipmunk)).